The primary structure comprises 448 residues: MANVVENLGKLERRVTISLPKDTVQKEIDARIQKLAKTVRIPGFRPGKVPLKMVAQQYAGQVEAEVLSDKIGQEFFTVSRAENLRVAGQPSFEPKQEQAEDAYAFDATFEVYPEVKIGDLATAEVERSTTSIGDAEIDRTLDILRKQRVHYHARGEAGEHGDGGEDTAAKNGDRVTVDFVGKIDDVAFQGGTAEDFPFVLGEGRMLPEFETAALGLKVGEQRTFDLKFPDDYHGKDVAGKTAQFTVTMKKIEWPHLPEIDAEFAKSLGIEDGDLTKMRAEIKENLEREAKRRTQSIVKNQVMDALLKISELDVPKALIEQDQQRLVEMARQDLAQRGVPNAKDAPIPAEMFAEQAERRVKLGLVLAELVKANGLEAKPEQIRAEVDEFAKSYEDPKEVVRWYYSNQQRLAEMEAFVVESNVVDFVLGKAKVTDKEVSFEALASASAQA.

A PPIase FKBP-type domain is found at glycine 172–proline 257.

This sequence belongs to the FKBP-type PPIase family. Tig subfamily.

The protein resides in the cytoplasm. It catalyses the reaction [protein]-peptidylproline (omega=180) = [protein]-peptidylproline (omega=0). Its function is as follows. Involved in protein export. Acts as a chaperone by maintaining the newly synthesized protein in an open conformation. Functions as a peptidyl-prolyl cis-trans isomerase. The polypeptide is Trigger factor (Burkholderia orbicola (strain MC0-3)).